Consider the following 54-residue polypeptide: UPF0391 membrane protein Rfer_1875 (54 aa).

Transmembrane regions (helical) follow at residues 5–25 (AVVF…GIAA) and 30–50 (IGKI…LFGL).

The protein belongs to the UPF0391 family.

It is found in the cell membrane. This Albidiferax ferrireducens (strain ATCC BAA-621 / DSM 15236 / T118) (Rhodoferax ferrireducens) protein is UPF0391 membrane protein Rfer_1875.